Here is a 278-residue protein sequence, read N- to C-terminus: Probable esterase TOX9 (278 aa).

Catalysis depends on charge relay system residues serine 119, aspartate 222, and histidine 250.

It belongs to the LovG family.

It participates in mycotoxin biosynthesis. Its function is as follows. Probable esterase; part of the Tox1A locus, one of the 2 loci that mediate the biosynthesis of T-toxin, a family of linear polyketides 37 to 45 carbons in length, of which the major component is 41 carbons, and which leads to high virulence to maize. One of the PKSs (PKS1 or PKS2) could synthesize a precursor, used subsequently by the other PKS as starter unit, to add additional carbons. Variability in the length of the final carbon backbone C35-47 could be achieved by varying the number of condensation cycles, or use of different starter or extender units or might be due to decarboxylation of the penultimate product, catalyzed by DEC1. Additional proteins are required for the biosynthesis of T-toxin, including oxidoreductases RED1, RED2, RED3, LAM1 and OXI1, as well as esterase TOX9. This chain is Probable esterase TOX9, found in Cochliobolus heterostrophus (strain C4 / ATCC 48331 / race T) (Southern corn leaf blight fungus).